The primary structure comprises 111 residues: Large ribosomal subunit protein uL22 (111 aa).

The protein belongs to the universal ribosomal protein uL22 family. As to quaternary structure, part of the 50S ribosomal subunit.

This protein binds specifically to 23S rRNA; its binding is stimulated by other ribosomal proteins, e.g. L4, L17, and L20. It is important during the early stages of 50S assembly. It makes multiple contacts with different domains of the 23S rRNA in the assembled 50S subunit and ribosome. Functionally, the globular domain of the protein is located near the polypeptide exit tunnel on the outside of the subunit, while an extended beta-hairpin is found that lines the wall of the exit tunnel in the center of the 70S ribosome. The sequence is that of Large ribosomal subunit protein uL22 from Fusobacterium nucleatum subsp. nucleatum (strain ATCC 25586 / DSM 15643 / BCRC 10681 / CIP 101130 / JCM 8532 / KCTC 2640 / LMG 13131 / VPI 4355).